The chain runs to 133 residues: MTAMKEDNAALITLKKNNDQEKLRVHKLTDASSNSADGFVINKAKNGGPLNKKSLVNNEQHIKKAVSPGRVRKHKTTTSSTKSRTKSKKKDASESKVQRENKGSFYQGAIFGSFLGAAVTTVLSNLAVKALQN.

The Nuclear portion of the chain corresponds to 1–104 (MTAMKEDNAA…SKVQRENKGS (104 aa)). Positions 36–100 (ADGFVINKAK…DASESKVQRE (65 aa)) are disordered. A Bipartite nuclear localization signal motif is present at residues 69 to 75 (GRVRKHK). Over residues 90-100 (KDASESKVQRE) the composition is skewed to basic and acidic residues. Residues 105–127 (FYQGAIFGSFLGAAVTTVLSNLA) form a helical membrane-spanning segment. Residues 128-133 (VKALQN) are Perinuclear space-facing.

As to quaternary structure, interacts with KAR5.

The protein resides in the nucleus outer membrane. The protein localises to the cytoplasm. It localises to the cytoskeleton. It is found in the microtubule organizing center. Its subcellular location is the spindle pole body. Functionally, required for the fusion of nuclear envelopes during mating, ensuring proper karyogamy. Plays a role in the initiation of outer nuclear envelope fusion. The protein is Pheromone-regulated membrane protein 3 (PRM3) of Saccharomyces cerevisiae (strain ATCC 204508 / S288c) (Baker's yeast).